The sequence spans 540 residues: Amino acid transporter AVT1B (540 aa).

Over residues 1–11 (MNHSTSDQSLY) the composition is skewed to polar residues. Residues 1–55 (MNHSTSDQSLYIESDDGDDERKHLSDDEDDDGTLSDTSDAYNQNQHHLSKASPYS) are disordered. 11 helical membrane-spanning segments follow: residues 155-175 (AVLN…PYAV), 180-200 (WLGL…GLLL), 227-247 (ILVS…YIIL), 273-293 (LFAL…DLSV), 297-317 (ISAG…WVGL), 332-352 (LATL…HGVF), 367-387 (AVLL…AVMG), 412-432 (IALW…LSPV), 452-474 (IAIR…FFGL), 478-500 (LIGS…LSIL), and 511-531 (ICIL…YSAL).

This sequence belongs to the amino acid/polyamine transporter 2 family. Amino acid/auxin permease (AAAP) (TC 2.A.18.5) subfamily.

It localises to the membrane. This chain is Amino acid transporter AVT1B, found in Arabidopsis thaliana (Mouse-ear cress).